A 79-amino-acid polypeptide reads, in one-letter code: Small ribosomal subunit protein bS18 (79 aa).

This sequence belongs to the bacterial ribosomal protein bS18 family. Part of the 30S ribosomal subunit. Forms a tight heterodimer with protein bS6.

Its function is as follows. Binds as a heterodimer with protein bS6 to the central domain of the 16S rRNA, where it helps stabilize the platform of the 30S subunit. This is Small ribosomal subunit protein bS18 from Streptococcus thermophilus (strain CNRZ 1066).